Reading from the N-terminus, the 239-residue chain is Protein Thf1 (239 aa).

The stretch at 183–219 (ERVKKDLELYRSNLDRLKQARAIVEEMVKAARRQQER) forms a coiled coil. Residues 211-221 (KAARRQQERRQ) are compositionally biased toward basic and acidic residues. Residues 211 to 239 (KAARRQQERRQSTASLPETPAADRRESSG) form a disordered region.

It belongs to the THF1 family.

May be involved in photosynthetic membrane biogenesis. In Synechococcus sp. (strain JA-3-3Ab) (Cyanobacteria bacterium Yellowstone A-Prime), this protein is Protein Thf1.